An 876-amino-acid chain; its full sequence is Pre-mRNA-splicing factor ATP-dependent RNA helicase-like protein PRP2 (876 aa).

Positions 1 to 111 (MSSITSETGK…KGLLGDSENE (111 aa)) are disordered. Serine 2 carries the N-acetylserine modification. The segment covering 61-70 (VFSNTNQGPE) has biased composition (polar residues). In terms of domain architecture, Helicase ATP-binding spans 233–399 (LQEIKKNQVL…FDNCPIFNVP (167 aa)). 246–253 (GETGSGKT) contacts ATP. A DEAH box motif is present at residues 346–349 (DEAH). The 175-residue stretch at 424–598 (TIFQIHTTQS…NTVLLLLSLG (175 aa)) folds into the Helicase C-terminal domain.

The protein belongs to the DEAD box helicase family. DEAH subfamily. Interacts directly with pre-mRNA. According to PubMed:2251118, associated with spliceosomes prior to and throughout step 1 of the splicing reaction. According to PubMed:8943336, it leaves the spliceosome before reaction 1. Interacts with SPP2.

The protein localises to the nucleus. It carries out the reaction ATP + H2O = ADP + phosphate + H(+). Functionally, involved in pre-mRNA splicing. Is required together with ATP and at least one other factor, for the first cleavage-ligation reaction. Functions as a molecular motor in the activation of the precatalytic spliceosome for the first transesterification reaction of pre-mRNA splicing by hydrolyzing ATP to cause the activation of the spliceosome without the occurrence of splicing. Capable of hydrolyzing nucleoside triphosphates in the presence of single-stranded RNAs such as poly(U). The sequence is that of Pre-mRNA-splicing factor ATP-dependent RNA helicase-like protein PRP2 (PRP2) from Saccharomyces cerevisiae (strain ATCC 204508 / S288c) (Baker's yeast).